The following is a 599-amino-acid chain: Fumarate reductase flavoprotein subunit (599 aa).

Residues glycine 12–glycine 16, valine 36–lysine 38, threonine 44–glycine 52, histidine 156–valine 158, and aspartate 212 contribute to the FAD site. At histidine 45 the chain carries Tele-8alpha-FAD histidine. Residues histidine 233 and arginine 249 contribute to the active site. FAD contacts are provided by residues histidine 357–tyrosine 358, glutamate 381, and arginine 392–leucine 398.

Belongs to the FAD-dependent oxidoreductase 2 family. FRD/SDH subfamily. As to quaternary structure, part of an enzyme complex containing four subunits: a flavoprotein (FrdA), an iron-sulfur protein (FrdB), and two hydrophobic anchor proteins (FrdC and FrdD). Requires FAD as cofactor.

The protein localises to the cell inner membrane. It catalyses the reaction a quinone + succinate = fumarate + a quinol. The enzyme catalyses a menaquinone + succinate = a menaquinol + fumarate. The chain is Fumarate reductase flavoprotein subunit (frdA) from Haemophilus influenzae (strain ATCC 51907 / DSM 11121 / KW20 / Rd).